We begin with the raw amino-acid sequence, 967 residues long: Aminopeptidase N (967 aa).

Over 1 to 8 the chain is Cytoplasmic; the sequence is MAKGFYIS. The chain crosses the membrane as a helical; Signal-anchor for type II membrane protein span at residues 9–32; the sequence is KPVGILAILLGVAAVCTIIALSVV. Residues 33-66 are cytosolic Ser/Thr-rich junction; the sequence is YSQEKNRSTESSTAASTAAPTGPTTTVATTLDQS. Topologically, residues 33–967 are extracellular; the sequence is YSQEKNRSTE…VVLRWFTENS (935 aa). Residue N38 is glycosylated (N-linked (GlcNAc...) asparagine). The disordered stretch occupies residues 41 to 61; the sequence is TESSTAASTAAPTGPTTTVAT. The tract at residues 67–967 is metalloprotease; it reads KPWNVYRLPK…VVLRWFTENS (901 aa). Residues N84 and N126 are each glycosylated (N-linked (GlcNAc...) asparagine). The residue at position 175 (Y175) is a Sulfotyrosine. N-linked (GlcNAc...) asparagine glycans are attached at residues N233 and N338. 351–355 provides a ligand contact to substrate; the sequence is GAMEN. A Zn(2+)-binding site is contributed by H387. Residue E388 is the Proton acceptor of the active site. Positions 391 and 410 each coordinate Zn(2+). Y418 bears the Sulfotyrosine mark. Residues N626, N682, and N740 are each glycosylated (N-linked (GlcNAc...) asparagine). Positions 670–840 are interaction with FCoV and TGEV spike glycoprotein; that stretch reads ASAQKVPVTL…GALACSNQVW (171 aa). Cystine bridges form between C762-C769 and C799-C835.

The protein belongs to the peptidase M1 family. As to quaternary structure, homodimer. Interacts with SLC6A19. (Microbial infection) Interacts with FCoV, CCoV, TGEV and HCoV-229E spike glycoprotein. Zn(2+) is required as a cofactor. Post-translationally, sulfated. N- and O-glycosylated. In terms of processing, may undergo proteolysis and give rise to a soluble form.

It is found in the cell membrane. It catalyses the reaction Release of an N-terminal amino acid, Xaa-|-Yaa- from a peptide, amide or arylamide. Xaa is preferably Ala, but may be most amino acids including Pro (slow action). When a terminal hydrophobic residue is followed by a prolyl residue, the two may be released as an intact Xaa-Pro dipeptide.. In terms of biological role, broad specificity aminopeptidase which plays a role in the final digestion of peptides generated from hydrolysis of proteins by gastric and pancreatic proteases. Also involved in the processing of various peptides including peptide hormones, such as angiotensin III and IV, neuropeptides, and chemokines. May also be involved the cleavage of peptides bound to major histocompatibility complex class II molecules of antigen presenting cells. May have a role in angiogenesis and promote cholesterol crystallization. May have a role in amino acid transport by acting as binding partner of amino acid transporter SLC6A19 and regulating its activity. (Microbial infection) In case of feline coronavirus (FCoV) infection, serves as a receptor for FCoV spike glycoprotein. It is as well a receptor for other serogroup I coronaviruses, like canine coronavirus (CCoV), porcine transmissible gastroenteritis virus (TGEV), and human coronavirus 229E (HCoV-229E). Also serves as a receptor for infectious bronchitis virus (IBV, Arkansas 99 serotype) in serogroup III. This is Aminopeptidase N (ANPEP) from Felis catus (Cat).